The sequence spans 481 residues: Phenylalanine--tRNA ligase alpha subunit (481 aa).

Residues Thr322, 361–363 (QLE), and Tyr401 contribute to the L-phenylalanine site. Residue Glu403 participates in Mg(2+) binding. Phe426 is a binding site for L-phenylalanine.

Belongs to the class-II aminoacyl-tRNA synthetase family. Phe-tRNA synthetase alpha subunit type 2 subfamily. Tetramer of two alpha and two beta subunits. Mg(2+) serves as cofactor.

Its subcellular location is the cytoplasm. The enzyme catalyses tRNA(Phe) + L-phenylalanine + ATP = L-phenylalanyl-tRNA(Phe) + AMP + diphosphate + H(+). This chain is Phenylalanine--tRNA ligase alpha subunit, found in Methanoculleus marisnigri (strain ATCC 35101 / DSM 1498 / JR1).